A 90-amino-acid chain; its full sequence is UPF0213 protein Reut_B5558 (90 aa).

In terms of domain architecture, GIY-YIG spans 5–80; sequence RQWYLYLLEC…KRMSSAQKIA (76 aa).

This sequence belongs to the UPF0213 family.

This Cupriavidus pinatubonensis (strain JMP 134 / LMG 1197) (Cupriavidus necator (strain JMP 134)) protein is UPF0213 protein Reut_B5558.